The sequence spans 291 residues: 3-hydroxy-5-phosphonooxypentane-2,4-dione thiolase (291 aa).

The active-site Schiff-base intermediate with substrate is the K203.

The protein belongs to the DeoC/FbaB aldolase family. Homodecamer.

The protein resides in the cytoplasm. The catalysed reaction is dihydroxyacetone phosphate + acetyl-CoA = 3-hydroxy-2,4-dioxopentyl phosphate + CoA. Involved in the degradation of phospho-AI-2, thereby terminating induction of the lsr operon and closing the AI-2 signaling cycle. Catalyzes the transfer of an acetyl moiety from 3-hydroxy-5-phosphonooxypentane-2,4-dione to CoA to form glycerone phosphate and acetyl-CoA. This Salmonella typhimurium (strain LT2 / SGSC1412 / ATCC 700720) protein is 3-hydroxy-5-phosphonooxypentane-2,4-dione thiolase.